The sequence spans 309 residues: Xylose/arabinose import permease protein XacI (309 aa).

A run of 6 helical transmembrane segments spans residues 29 to 49 (LVVF…MTAI), 89 to 109 (LIMS…AAYG), 121 to 141 (MLML…VPLA), 170 to 190 (ELVP…TILF), 227 to 247 (MFGV…LFAF), and 282 to 302 (AAFL…EQFA). Residues 85–297 (FFNSLIMSIP…VPTLILYVAF (213 aa)) form the ABC transmembrane type-1 domain.

Belongs to the binding-protein-dependent transport system permease family. The complex is composed of two ATP-binding proteins (XacJ and XacK), two transmembrane proteins (XacH and XacI) and a solute-binding protein (XacG).

The protein localises to the cell membrane. Functionally, part of the ABC transporter complex XacGHIJK involved in the uptake of xylose and arabinose. Responsible for the translocation of the substrate across the membrane. The sequence is that of Xylose/arabinose import permease protein XacI from Haloferax volcanii (strain ATCC 29605 / DSM 3757 / JCM 8879 / NBRC 14742 / NCIMB 2012 / VKM B-1768 / DS2) (Halobacterium volcanii).